A 132-amino-acid polypeptide reads, in one-letter code: Protein NrdI (132 aa).

It belongs to the NrdI family.

Probably involved in ribonucleotide reductase function. This Bartonella henselae (strain ATCC 49882 / DSM 28221 / CCUG 30454 / Houston 1) (Rochalimaea henselae) protein is Protein NrdI.